Consider the following 109-residue polypeptide: Iron-sulfur cluster assembly protein CyaY (109 aa).

This sequence belongs to the frataxin family.

Its function is as follows. Involved in iron-sulfur (Fe-S) cluster assembly. May act as a regulator of Fe-S biogenesis. This Bordetella bronchiseptica (strain ATCC BAA-588 / NCTC 13252 / RB50) (Alcaligenes bronchisepticus) protein is Iron-sulfur cluster assembly protein CyaY.